The sequence spans 154 residues: Ribosome maturation factor RimP (154 aa).

It belongs to the RimP family.

It localises to the cytoplasm. Required for maturation of 30S ribosomal subunits. The polypeptide is Ribosome maturation factor RimP (Clostridium kluyveri (strain ATCC 8527 / DSM 555 / NBRC 12016 / NCIMB 10680 / K1)).